A 340-amino-acid polypeptide reads, in one-letter code: Pseudaminic acid synthase (340 aa).

Positions 281-337 (SLFVIKDIQKGEALTENNIKALRPNLGLHPKFYKEILGQKASKFLKANTPLSADDIE) constitute an AFP-like domain.

It belongs to the pseudaminic acid synthase family. A divalent metal cation is required as a cofactor.

It carries out the reaction 2,4-diacetamido-2,4,6-trideoxy-beta-L-altrose + phosphoenolpyruvate + H2O = pseudaminate + phosphate. Catalyzes the fifth step in the biosynthesis of pseudaminic acid, a sialic-acid-like sugar that is used to modify flagellin. Catalyzes the condensation of phosphoenolpyruvate with 2,4-diacetamido-2,4,6-trideoxy-beta-l-altropyranose, forming pseudaminic acid. The chain is Pseudaminic acid synthase (pseI) from Helicobacter pylori (strain ATCC 700392 / 26695) (Campylobacter pylori).